A 330-amino-acid polypeptide reads, in one-letter code: Protoheme IX farnesyltransferase (330 aa).

Helical transmembrane passes span 33–53 (VMTL…VDAD), 54–74 (PFLA…AGAL), 101–121 (VSNA…LMAL), 126–146 (LAAG…TMIL), 154–174 (IVIG…AATG), 180–200 (AVIL…ALAL), 227–247 (ILLY…TGLG), 250–270 (VYGA…WRIF), and 308–328 (VLFA…IPGV).

Belongs to the UbiA prenyltransferase family. Protoheme IX farnesyltransferase subfamily. Interacts with CtaA.

It is found in the cell inner membrane. The catalysed reaction is heme b + (2E,6E)-farnesyl diphosphate + H2O = Fe(II)-heme o + diphosphate. Its pathway is porphyrin-containing compound metabolism; heme O biosynthesis; heme O from protoheme: step 1/1. In terms of biological role, converts heme B (protoheme IX) to heme O by substitution of the vinyl group on carbon 2 of heme B porphyrin ring with a hydroxyethyl farnesyl side group. The sequence is that of Protoheme IX farnesyltransferase from Maricaulis maris (strain MCS10) (Caulobacter maris).